Consider the following 159-residue polypeptide: ATP synthase subunit b (159 aa).

Residues 8-28 form a helical membrane-spanning segment; that stretch reads ILATIINFIILILILKHFFWD.

It belongs to the ATPase B chain family. F-type ATPases have 2 components, F(1) - the catalytic core - and F(0) - the membrane proton channel. F(1) has five subunits: alpha(3), beta(3), gamma(1), delta(1), epsilon(1). F(0) has three main subunits: a(1), b(2) and c(10-14). The alpha and beta chains form an alternating ring which encloses part of the gamma chain. F(1) is attached to F(0) by a central stalk formed by the gamma and epsilon chains, while a peripheral stalk is formed by the delta and b chains.

The protein localises to the cell membrane. Its function is as follows. F(1)F(0) ATP synthase produces ATP from ADP in the presence of a proton or sodium gradient. F-type ATPases consist of two structural domains, F(1) containing the extramembraneous catalytic core and F(0) containing the membrane proton channel, linked together by a central stalk and a peripheral stalk. During catalysis, ATP synthesis in the catalytic domain of F(1) is coupled via a rotary mechanism of the central stalk subunits to proton translocation. In terms of biological role, component of the F(0) channel, it forms part of the peripheral stalk, linking F(1) to F(0). In Clostridium perfringens (strain ATCC 13124 / DSM 756 / JCM 1290 / NCIMB 6125 / NCTC 8237 / Type A), this protein is ATP synthase subunit b.